Reading from the N-terminus, the 376-residue chain is UDP-4-amino-4,6-dideoxy-N-acetyl-beta-L-altrosamine transaminase (376 aa).

Residues tyrosine 4, 24–27, alanine 54, and serine 176 contribute to the substrate site; that span reads EILT. Lysine 181 bears the N6-(pyridoxal phosphate)lysine mark. Substrate is bound by residues asparagine 226 and 311-314; that span reads QVHY.

It belongs to the DegT/DnrJ/EryC1 family.

It carries out the reaction UDP-4-amino-4,6-dideoxy-N-acetyl-beta-L-altrosamine + 2-oxoglutarate = UDP-2-acetamido-2,6-dideoxy-beta-L-arabino-hex-4-ulose + L-glutamate. Functionally, catalyzes the second step in the biosynthesis of pseudaminic acid, a sialic-acid-like sugar that is used to modify flagellin. Uses UDP-2-acetamido-2,6-dideoxy-beta-L-arabino-4-hexulose as substrate producing UDP-4-amino-4,6-dideoxy-beta-L-AltNAc. In Campylobacter jejuni subsp. jejuni serotype O:23/36 (strain 81-176), this protein is UDP-4-amino-4,6-dideoxy-N-acetyl-beta-L-altrosamine transaminase (pseC).